The sequence spans 144 residues: Large ribosomal subunit protein uL15 (144 aa).

Positions 1–59 are disordered; that stretch reads MRLNTISPAEGSKPTGKRSGRGIGSGLGKTGGVGHKGQKSRSGGRVKPGFEGGQMPIQR. The span at 21 to 35 shows a compositional bias: gly residues; it reads RGIGSGLGKTGGVGH.

Belongs to the universal ribosomal protein uL15 family. In terms of assembly, part of the 50S ribosomal subunit.

Binds to the 23S rRNA. This chain is Large ribosomal subunit protein uL15, found in Alteromonas mediterranea (strain DSM 17117 / CIP 110805 / LMG 28347 / Deep ecotype).